The sequence spans 257 residues: Electron transfer flavoprotein subunit beta (257 aa).

It belongs to the ETF beta-subunit/FixA family. In terms of assembly, heterodimer of an alpha and a beta subunit. The cofactor is FAD. AMP is required as a cofactor.

In terms of biological role, the electron transfer flavoprotein serves as a specific electron acceptor for other dehydrogenases. It transfers the electrons to the main respiratory chain via ETF-ubiquinone oxidoreductase (ETF dehydrogenase). This is Electron transfer flavoprotein subunit beta (etfB) from Bacillus subtilis (strain 168).